A 694-amino-acid polypeptide reads, in one-letter code: ATP-binding cassette sub-family G member 8 (694 aa).

The Cytoplasmic segment spans residues 1 to 437 (MAEKTKEETQ…ISNDFRDLPT (437 aa)). One can recognise an ABC transporter domain in the interval 91 to 335 (AQFKLPWRSR…FTSIGYPCPR (245 aa)). The 249-residue stretch at 436-684 (PTLFIHGAEA…FLSLYYLSLK (249 aa)) folds into the ABC transmembrane type-2 domain. Residues 438–458 (LFIHGAEACLMSLIIGFLYYG) traverse the membrane as a helical segment. Residues 459–468 (HADKPLSFMD) are Extracellular-facing. A helical transmembrane segment spans residues 469 to 489 (MAALLFMIGALIPFNVILDVV). Residues 490–518 (SKCHSERSLLYYELEDGLYTAGPYFFAKV) are Cytoplasmic-facing. The helical transmembrane segment at 519–539 (LGELPEHCAYVIIYGMPIYWL) threads the bilayer. Over 540–548 (TNLRPGPEL) the chain is Extracellular. The chain crosses the membrane as a helical span at residues 549–569 (FLLHFMLLWLVVFCCRTMALA). Topologically, residues 570–576 (ASAMLPT) are cytoplasmic. Residues 577 to 597 (FHMSSFCCNALYNSFYLTAGF) traverse the membrane as a helical segment. Over 598-660 (MINLNNLWIV…VTAMDLNSHP (63 aa)) the chain is Extracellular. N-linked (GlcNAc...) asparagine glycosylation is present at Asn-640. A helical membrane pass occupies residues 661–681 (LYAIYLIVIGISCGFLSLYYL). Topologically, residues 682–694 (SLKFIKQKSIQDW) are cytoplasmic.

This sequence belongs to the ABC transporter superfamily. ABCG family. Eye pigment precursor importer (TC 3.A.1.204) subfamily. As to quaternary structure, heterodimer with ABCG8. It depends on Mg(2+) as a cofactor. N-glycosylated. N-glycosylation is important for efficient export out of the endoplasmic reticulum. As to expression, highest expression in liver, with lower levels in small intestine and colon.

It localises to the cell membrane. The protein localises to the apical cell membrane. The catalysed reaction is cholesterol(in) + ATP + H2O = cholesterol(out) + ADP + phosphate + H(+). It carries out the reaction sitosterol(in) + ATP + H2O = sitosterol(out) + ADP + phosphate + H(+). ABCG5 and ABCG8 form an obligate heterodimer that mediates Mg(2+)- and ATP-dependent sterol transport across the cell membrane. Plays an essential role in the selective transport of the dietary cholesterol in and out of the enterocytes and in the selective sterol excretion by the liver into bile. Required for normal sterol homeostasis. The heterodimer with ABCG5 has ATPase activity. This is ATP-binding cassette sub-family G member 8 from Rattus norvegicus (Rat).